Reading from the N-terminus, the 131-residue chain is L-ectoine synthase (131 aa).

This sequence belongs to the ectoine synthase family.

The enzyme catalyses (2S)-4-acetamido-2-aminobutanoate = L-ectoine + H2O. The protein operates within amine and polyamine biosynthesis; ectoine biosynthesis; L-ectoine from L-aspartate 4-semialdehyde: step 3/3. Its function is as follows. Catalyzes the circularization of gamma-N-acetyl-alpha,gamma-diaminobutyric acid (ADABA) to ectoine (1,4,5,6-tetrahydro-2-methyl-4-pyrimidine carboxylic acid), which is an excellent osmoprotectant. The chain is L-ectoine synthase from Wolinella succinogenes (strain ATCC 29543 / DSM 1740 / CCUG 13145 / JCM 31913 / LMG 7466 / NCTC 11488 / FDC 602W) (Vibrio succinogenes).